A 149-amino-acid polypeptide reads, in one-letter code: Large ribosomal subunit protein bL9 (149 aa).

It belongs to the bacterial ribosomal protein bL9 family.

In terms of biological role, binds to the 23S rRNA. In Geobacillus thermodenitrificans (strain NG80-2), this protein is Large ribosomal subunit protein bL9.